A 240-amino-acid chain; its full sequence is MGKAQPLPILITGGGRRIGLALAWHFINQKQPVIVSYRTHYPAIDGLIKAGAQCIQADFSTNDGVMAFADEVLKSPHGLRAILHNASAWMAEKPGAPLADVLACMMQIHVNTPYLLNHALERLLRGHGHAASDIIHFTDYVVERGSDKHIAYAASKAALDNMTRSFARKLAPEVKVNSIAPSLILFNEHDDAEYRQQALNKSLMKTAPGEKEVIDLVDYLLTSCFVTGRSFPLDGGRHLR.

Residue tyrosine 152 is the Proton acceptor of the active site.

The protein belongs to the short-chain dehydrogenases/reductases (SDR) family. FolM subfamily.

It catalyses the reaction (6S)-5,6,7,8-tetrahydrofolate + NADP(+) = 7,8-dihydrofolate + NADPH + H(+). It carries out the reaction 7,8-dihydromonapterin + NADPH + H(+) = 5,6,7,8-tetrahydromonapterin + NADP(+). In terms of biological role, catalyzes the reduction of dihydromonapterin to tetrahydromonapterin. Also has lower activity with dihydrofolate. The protein is Dihydromonapterin reductase (folM) of Shigella sonnei (strain Ss046).